A 205-amino-acid chain; its full sequence is Ribosomal RNA large subunit methyltransferase E (205 aa).

S-adenosyl-L-methionine is bound by residues Gly-60, Trp-62, Asp-80, Asp-96, and Asp-121. The active-site Proton acceptor is the Lys-161.

Belongs to the class I-like SAM-binding methyltransferase superfamily. RNA methyltransferase RlmE family.

It is found in the cytoplasm. It carries out the reaction uridine(2552) in 23S rRNA + S-adenosyl-L-methionine = 2'-O-methyluridine(2552) in 23S rRNA + S-adenosyl-L-homocysteine + H(+). Its function is as follows. Specifically methylates the uridine in position 2552 of 23S rRNA at the 2'-O position of the ribose in the fully assembled 50S ribosomal subunit. The chain is Ribosomal RNA large subunit methyltransferase E from Chromobacterium violaceum (strain ATCC 12472 / DSM 30191 / JCM 1249 / CCUG 213 / NBRC 12614 / NCIMB 9131 / NCTC 9757 / MK).